Consider the following 166-residue polypeptide: Nucleotide-binding protein Dred_1927 (166 aa).

The protein belongs to the YajQ family.

Nucleotide-binding protein. The polypeptide is Nucleotide-binding protein Dred_1927 (Desulforamulus reducens (strain ATCC BAA-1160 / DSM 100696 / MI-1) (Desulfotomaculum reducens)).